The sequence spans 217 residues: UPF0323 lipoprotein HPP12_0232 (217 aa).

The first 27 residues, 1–27 (MKKPYRKISDYAIVGGLSALVMVSIVG), serve as a signal peptide directing secretion. The N-palmitoyl cysteine moiety is linked to residue Cys28. The S-diacylglycerol cysteine moiety is linked to residue Cys28. The span at 160-171 (QRTYKSPQAYQR) shows a compositional bias: polar residues. The tract at residues 160-217 (QRTYKSPQAYQRSQNSFSKSAPSASSMGTASKGQSGFFGSSRPTSSPAISSGTRGFNS) is disordered. The segment covering 172 to 185 (SQNSFSKSAPSASS) has biased composition (low complexity). The segment covering 186–197 (MGTASKGQSGFF) has biased composition (polar residues). Residues 199–210 (SSRPTSSPAISS) are compositionally biased toward low complexity.

This sequence belongs to the UPF0323 family.

The protein localises to the cell membrane. The chain is UPF0323 lipoprotein HPP12_0232 from Helicobacter pylori (strain P12).